Reading from the N-terminus, the 231-residue chain is Large ribosomal subunit protein uL5m (231 aa).

Belongs to the universal ribosomal protein uL5 family.

Its subcellular location is the mitochondrion. The polypeptide is Large ribosomal subunit protein uL5m (RPL5) (Prototheca wickerhamii).